Consider the following 288-residue polypeptide: UTP--glucose-1-phosphate uridylyltransferase (288 aa).

This sequence belongs to the UDPGP type 2 family.

The catalysed reaction is alpha-D-glucose 1-phosphate + UTP + H(+) = UDP-alpha-D-glucose + diphosphate. Its pathway is glycolipid metabolism; diglucosyl-diacylglycerol biosynthesis. In terms of biological role, catalyzes the formation of UDP-glucose from glucose-1-phosphate and UTP. This is an intermediate step in the biosynthesis of diglucosyl-diacylglycerol (Glc2-DAG), i.e. the predominant glycolipid found in the S.aureus membrane, which is also used as a membrane anchor for lipoteichoic acid (LTA). In Staphylococcus aureus (strain USA300), this protein is UTP--glucose-1-phosphate uridylyltransferase (gtaB).